The chain runs to 500 residues: Cytochrome c-552 (500 aa).

Residues 1 to 24 form the signal peptide; it reads MKFLIKSLAVATISILGCLQTALA. Positions 102, 130, 133, 134, 168, 171, 172, 217, 220, and 221 each coordinate heme c. Ca(2+) is bound by residues Glu-223, Tyr-224, Lys-268, and Gln-270. Tyr-224 contacts substrate. Residue His-271 coordinates substrate. Heme c-binding residues include His-282, Cys-289, Cys-292, His-293, His-308, Cys-321, Cys-324, His-325, and His-400. The tract at residues 477-500 is disordered; it reads ARAKGLLPAEEADKPVAAPKAEAK.

It belongs to the cytochrome c-552 family. Ca(2+) is required as a cofactor. Requires heme c as cofactor.

The protein resides in the periplasm. The enzyme catalyses 6 Fe(III)-[cytochrome c] + NH4(+) + 2 H2O = 6 Fe(II)-[cytochrome c] + nitrite + 8 H(+). It participates in nitrogen metabolism; nitrate reduction (assimilation). Functionally, catalyzes the reduction of nitrite to ammonia, consuming six electrons in the process. The chain is Cytochrome c-552 from Mannheimia haemolytica (Pasteurella haemolytica).